The chain runs to 221 residues: Thiamine-phosphate synthase (221 aa).

Residues 41 to 45 (QLRDK) and Asn82 contribute to the 4-amino-2-methyl-5-(diphosphooxymethyl)pyrimidine site. Mg(2+) is bound by residues Asp83 and Asp102. 4-amino-2-methyl-5-(diphosphooxymethyl)pyrimidine is bound at residue Ser120. 146–148 (TPT) contributes to the 2-[(2R,5Z)-2-carboxy-4-methylthiazol-5(2H)-ylidene]ethyl phosphate binding site. A 4-amino-2-methyl-5-(diphosphooxymethyl)pyrimidine-binding site is contributed by Lys149. 2-[(2R,5Z)-2-carboxy-4-methylthiazol-5(2H)-ylidene]ethyl phosphate is bound at residue Gly177.

The protein belongs to the thiamine-phosphate synthase family. Requires Mg(2+) as cofactor.

It carries out the reaction 2-[(2R,5Z)-2-carboxy-4-methylthiazol-5(2H)-ylidene]ethyl phosphate + 4-amino-2-methyl-5-(diphosphooxymethyl)pyrimidine + 2 H(+) = thiamine phosphate + CO2 + diphosphate. The catalysed reaction is 2-(2-carboxy-4-methylthiazol-5-yl)ethyl phosphate + 4-amino-2-methyl-5-(diphosphooxymethyl)pyrimidine + 2 H(+) = thiamine phosphate + CO2 + diphosphate. It catalyses the reaction 4-methyl-5-(2-phosphooxyethyl)-thiazole + 4-amino-2-methyl-5-(diphosphooxymethyl)pyrimidine + H(+) = thiamine phosphate + diphosphate. It participates in cofactor biosynthesis; thiamine diphosphate biosynthesis; thiamine phosphate from 4-amino-2-methyl-5-diphosphomethylpyrimidine and 4-methyl-5-(2-phosphoethyl)-thiazole: step 1/1. Functionally, condenses 4-methyl-5-(beta-hydroxyethyl)thiazole monophosphate (THZ-P) and 2-methyl-4-amino-5-hydroxymethyl pyrimidine pyrophosphate (HMP-PP) to form thiamine monophosphate (TMP). This Mycolicibacterium vanbaalenii (strain DSM 7251 / JCM 13017 / BCRC 16820 / KCTC 9966 / NRRL B-24157 / PYR-1) (Mycobacterium vanbaalenii) protein is Thiamine-phosphate synthase.